Here is a 344-residue protein sequence, read N- to C-terminus: Methionine import ATP-binding protein MetN (344 aa).

Residues 2–241 (IEIKSVNKVF…PKTELAHQFI (240 aa)) form the ABC transporter domain. 38 to 45 (GSSGAGKS) contributes to the ATP binding site.

It belongs to the ABC transporter superfamily. Methionine importer (TC 3.A.1.24) family. As to quaternary structure, the complex is composed of two ATP-binding proteins (MetN), two transmembrane proteins (MetI) and a solute-binding protein (MetQ).

Its subcellular location is the cell inner membrane. It carries out the reaction L-methionine(out) + ATP + H2O = L-methionine(in) + ADP + phosphate + H(+). The enzyme catalyses D-methionine(out) + ATP + H2O = D-methionine(in) + ADP + phosphate + H(+). Its function is as follows. Part of the ABC transporter complex MetNIQ involved in methionine import. Responsible for energy coupling to the transport system. The sequence is that of Methionine import ATP-binding protein MetN from Vibrio cholerae serotype O1 (strain ATCC 39315 / El Tor Inaba N16961).